The sequence spans 64 residues: Toxin BmKIT3 (64 aa).

Residues D1–G61 enclose the LCN-type CS-alpha/beta domain. Cystine bridges form between C10–C60, C14–C35, C21–C42, and C25–C44. Position 60 is a cysteine amide (C60).

Belongs to the long (4 C-C) scorpion toxin superfamily. Sodium channel inhibitor family. Beta subfamily. As to expression, expressed by the venom gland.

It is found in the secreted. In terms of biological role, depressant insect beta-toxins cause a transient contraction paralysis followed by a slow flaccid paralysis. They bind voltage-independently at site-4 of sodium channels (Nav) and shift the voltage of activation toward more negative potentials thereby affecting sodium channel activation and promoting spontaneous and repetitive firing. The chain is Toxin BmKIT3 from Olivierus martensii (Manchurian scorpion).